We begin with the raw amino-acid sequence, 286 residues long: NADP-dependent dehydrogenase clz5 (286 aa).

Ser49, Leu51, Asp93, Tyr207, Lys211, Ile241, and Gln245 together coordinate NADP(+). Catalysis depends on Tyr207, which acts as the Proton acceptor. Catalysis depends on Tyr207, which acts as the Proton donor. Lys211 serves as the catalytic Lowers pKa of active site Tyr.

Belongs to the short-chain dehydrogenases/reductases (SDR) family. In terms of assembly, homodimer.

Its subcellular location is the cytoplasm. It localises to the cytosol. The protein operates within secondary metabolite biosynthesis. NADP-dependent dehydrogenase; part of the gene cluster that mediates the biosynthesis of squalestatin S1 (SQS1, also known as zaragozic acid A), a heavily oxidized fungal polyketide that offers potent cholesterol lowering activity by targeting squalene synthase (SS). SQS1 is composed of a 2,8-dioxobicyclic[3.2.1]octane-3,4,5-tricarboxyclic acid core that is connected to two lipophilic polyketide arms. These initial steps feature the priming of an unusual benzoic acid starter unit onto the highly reducing polyketide synthase clz14, followed by oxaloacetate extension and product release to generate a tricarboxylic acid containing product. The phenylalanine ammonia lyase (PAL) clz10 and the acyl-CoA ligase clz12 are involved in transforming phenylalanine into benzoyl-CoA. The citrate synthase-like protein clz17 is involved in connecting the C-alpha-carbons of the hexaketide chain and oxaloacetate to afford the tricarboxylic acid unit. The potential hydrolytic enzymes, clz11 and clz13, are in close proximity to pks2 and may participate in product release. On the other side, the tetraketide arm is synthesized by a the squalestatin tetraketide synthase clz2 and enzymatically esterified to the core in the last biosynthetic step, by the acetyltransferase clz6. The biosynthesis of the tetraketide must involve 3 rounds of chain extension. After the first and second rounds methyl-transfer occurs, and in all rounds of extension the ketoreductase and dehydratase are active. The enoyl reductase and C-MeT of clz2 are not active in the final round of extension. The acetyltransferase clz6 appears to have a broad substrate selectivity for its acyl CoA substrate, allowing the in vitro synthesis of novel squalestatins. The biosynthesis of SQS1 requires several oxidative steps likely performed by oxidoreductases clz3, clz15 and clz16. Finally, in support of the identification of the cluster as being responsible for SQS1 production, the cluster contains a gene encoding a putative squalene synthase (SS) clz20, suggesting a likely mechanism for self-resistance. The protein is NADP-dependent dehydrogenase clz5 of Cochliobolus lunatus (Filamentous fungus).